Reading from the N-terminus, the 420-residue chain is Protein STB1 (420 aa).

Ser-2 bears the N-acetylserine mark. Residues 2–70 form an interaction with SWI6 region; the sequence is SQPQMSPEKE…DEDHKTLLEA (69 aa). Ser-7 carries the post-translational modification Phosphoserine. 2 disordered regions span residues 30 to 187 and 273 to 319; these read QLKL…SDNT and DSPS…ELNG. A compositionally biased stretch (basic and acidic residues) spans 43 to 55; sequence RKQDSTTKKRSGE. Ser-72 carries the post-translational modification Phosphoserine. Thr-99 bears the Phosphothreonine mark. At Ser-102 the chain carries Phosphoserine. A compositionally biased stretch (basic and acidic residues) spans 106–122; it reads RKAEDRSQQIKPRKEDT. The segment covering 156 to 169 has biased composition (low complexity); that stretch reads NNNNSSNHSNNNNN. The segment covering 277-319 has biased composition (polar residues); that stretch reads LYLSNNNGSVQATLSPQQRRKPTTNTLHPPSNVPTTPSRELNG. At Thr-419 the chain carries Phosphothreonine.

Interacts with the ANK repeats of SWI6. The interaction with SWI6 is required for function. Interacts with SIN3. In terms of processing, phosphorylated by CDC28 in a cell cycle-dependent manner, inhibiting the interaction with SWI6.

The protein resides in the cytoplasm. Its subcellular location is the nucleus. Functionally, involved in the regulation and timing of MBF-dependent transcription in late G1 of the cell cycle. The protein is Protein STB1 (STB1) of Saccharomyces cerevisiae (strain ATCC 204508 / S288c) (Baker's yeast).